Consider the following 265-residue polypeptide: 3-methyl-2-oxobutanoate hydroxymethyltransferase (265 aa).

2 residues coordinate Mg(2+): D44 and D83. 3-methyl-2-oxobutanoate-binding positions include 44 to 45, D83, and K113; that span reads DS. E115 is a Mg(2+) binding site. E183 serves as the catalytic Proton acceptor.

It belongs to the PanB family. Homodecamer; pentamer of dimers. The cofactor is Mg(2+).

It localises to the cytoplasm. It catalyses the reaction 3-methyl-2-oxobutanoate + (6R)-5,10-methylene-5,6,7,8-tetrahydrofolate + H2O = 2-dehydropantoate + (6S)-5,6,7,8-tetrahydrofolate. Its pathway is cofactor biosynthesis; (R)-pantothenate biosynthesis; (R)-pantoate from 3-methyl-2-oxobutanoate: step 1/2. In terms of biological role, catalyzes the reversible reaction in which hydroxymethyl group from 5,10-methylenetetrahydrofolate is transferred onto alpha-ketoisovalerate to form ketopantoate. The protein is 3-methyl-2-oxobutanoate hydroxymethyltransferase of Leptospira borgpetersenii serovar Hardjo-bovis (strain JB197).